Consider the following 219-residue polypeptide: Uracil-DNA glycosylase (219 aa).

Asp-61 (proton acceptor) is an active-site residue.

The protein belongs to the uracil-DNA glycosylase (UDG) superfamily. UNG family.

Its subcellular location is the cytoplasm. It catalyses the reaction Hydrolyzes single-stranded DNA or mismatched double-stranded DNA and polynucleotides, releasing free uracil.. In terms of biological role, excises uracil residues from the DNA which can arise as a result of misincorporation of dUMP residues by DNA polymerase or due to deamination of cytosine. This is Uracil-DNA glycosylase from Exiguobacterium sibiricum (strain DSM 17290 / CCUG 55495 / CIP 109462 / JCM 13490 / 255-15).